The sequence spans 317 residues: Glutathione synthetase (317 aa).

Residues 126–311 (KFFATQFTQC…IGDKLMDAIA (186 aa)) enclose the ATP-grasp domain. 152–208 (AAEHRDIILKPLDGMGGSSIFRHREGDPNLSVILETLTQHGSQQIMAQRYLPEIKDG) contributes to the ATP binding site. 2 residues coordinate Mg(2+): glutamate 282 and asparagine 284.

Belongs to the prokaryotic GSH synthase family. Mg(2+) is required as a cofactor. Mn(2+) serves as cofactor.

The catalysed reaction is gamma-L-glutamyl-L-cysteine + glycine + ATP = glutathione + ADP + phosphate + H(+). The protein operates within sulfur metabolism; glutathione biosynthesis; glutathione from L-cysteine and L-glutamate: step 2/2. The chain is Glutathione synthetase from Pseudomonas aeruginosa (strain ATCC 15692 / DSM 22644 / CIP 104116 / JCM 14847 / LMG 12228 / 1C / PRS 101 / PAO1).